A 149-amino-acid chain; its full sequence is Large ribosomal subunit protein bL9 (149 aa).

This sequence belongs to the bacterial ribosomal protein bL9 family.

Functionally, binds to the 23S rRNA. The chain is Large ribosomal subunit protein bL9 from Aliivibrio fischeri (strain ATCC 700601 / ES114) (Vibrio fischeri).